A 395-amino-acid chain; its full sequence is Endophilin-B2 (395 aa).

An N-acetylmethionine modification is found at methionine 1. The segment at 1–27 (MDFNMKKLASDAGIFFTRAVQFTEEKF) is membrane-binding amphipathic helix. Serine 10 carries the post-translational modification Phosphoserine. The 264-residue stretch at 24–287 (EEKFGQAEKT…LGRFPGTFVG (264 aa)) folds into the BAR domain. Coiled-coil stretches lie at residues 116-132 (IKVAEAEKQLGAAERDF) and 206-240 (ASALWNDEVDKAEQELRVAQTEFDRQAEVTRLLLE). The region spanning 335 to 395 (SGTRKARVLY…VPVTYLELLS (61 aa)) is the SH3 domain. Residue serine 395 is modified to Phosphoserine.

The protein belongs to the endophilin family. As to quaternary structure, homodimer, and heterodimer with SH3GLB1. In terms of tissue distribution, detected in skeletal muscle, adipocyte, brain, lung, colon and mammary gland.

Its subcellular location is the cytoplasm. This is Endophilin-B2 (SH3GLB2) from Homo sapiens (Human).